We begin with the raw amino-acid sequence, 114 residues long: uncharacterized protein (114 aa).

A signal peptide spans methionine 1–alanine 19. At serine 41 the chain carries Phosphoserine.

The protein belongs to the protease inhibitor I9 family.

This is an uncharacterized protein from Saccharomyces cerevisiae (strain ATCC 204508 / S288c) (Baker's yeast).